An 88-amino-acid chain; its full sequence is Small ribosomal subunit protein bS20 (88 aa).

Belongs to the bacterial ribosomal protein bS20 family.

Binds directly to 16S ribosomal RNA. This is Small ribosomal subunit protein bS20 from Chelativorans sp. (strain BNC1).